Reading from the N-terminus, the 1441-residue chain is Receptor-type tyrosine-protein phosphatase T (1441 aa).

The signal sequence occupies residues 1–25 (MASLAALALSLLLRLQLPPLPGARA). Residues 26 to 747 (QSAAGGCSFD…EKQVDNTVKM (722 aa)) are Extracellular-facing. Residues 30–191 (GGCSFDEHYS…VRVLAHPCRK (162 aa)) form the MAM domain. Residues Asn-78, Asn-98, Asn-137, and Asn-208 are each glycosylated (N-linked (GlcNAc...) asparagine). The Ig-like C2-type domain occupies 193-284 (PHFLRLQNVE…SGVSNYAELI (92 aa)). A disulfide bridge links Cys-213 with Cys-267. 4 Fibronectin type-III domains span residues 291–384 (PIAP…TKCA), 389–483 (GPQN…TEED), 484–590 (VPGA…SAPS), and 591–726 (MPEY…ATKG). 6 N-linked (GlcNAc...) asparagine glycosylation sites follow: Asn-421, Asn-510, Asn-547, Asn-601, Asn-654, and Asn-684. The chain crosses the membrane as a helical span at residues 748–768 (AGVIAGLLMFIIILLGVMLTI). At 769 to 1441 (KRRRNAYSYS…EVALEYLSSF (673 aa)) the chain is on the cytoplasmic side. The interval 790–839 (TQSGAQREMGPVASADKPTTKLSASRNDEGFSSSSQDVNGFTDGSRGELS) is disordered. Residues 809-828 (TKLSASRNDEGFSSSSQDVN) are compositionally biased toward polar residues. 2 Tyrosine-protein phosphatase domains span residues 889 to 1143 (FKEE…ILEA) and 1175 to 1437 (IKDE…ALEY). Substrate contacts are provided by residues Asp-1052, 1084 to 1090 (CSAGAGR), and Gln-1128. Cys-1084 functions as the Phosphocysteine intermediate in the catalytic mechanism. Ser-1208 carries the phosphoserine modification. Cys-1378 serves as the catalytic Phosphocysteine intermediate.

Belongs to the protein-tyrosine phosphatase family. Receptor class 2B subfamily. Expressed in colon, lung, heart and testis, as well as in fetal and adult brain. Not detected in muscle and peripheral blood leukocytes.

It localises to the membrane. The catalysed reaction is O-phospho-L-tyrosyl-[protein] + H2O = L-tyrosyl-[protein] + phosphate. Functionally, may be involved in both signal transduction and cellular adhesion in the CNS. The sequence is that of Receptor-type tyrosine-protein phosphatase T (PTPRT) from Homo sapiens (Human).